A 243-amino-acid chain; its full sequence is uncharacterized protein (243 aa).

The protein belongs to the ycf23 family.

The protein localises to the plastid. The protein resides in the cyanelle. This is an uncharacterized protein from Cyanophora paradoxa.